The sequence spans 295 residues: Protease HtpX (295 aa).

The next 2 helical transmembrane spans lie at Ile4–Leu24 and Ser41–Ile61. His147 serves as a coordination point for Zn(2+). Glu148 is an active-site residue. Position 151 (His151) interacts with Zn(2+). Helical transmembrane passes span Val158–Ile178 and Val199–Phe219. Glu224 is a Zn(2+) binding site.

It belongs to the peptidase M48B family. Zn(2+) serves as cofactor.

It localises to the cell inner membrane. In Pseudomonas putida (strain ATCC 47054 / DSM 6125 / CFBP 8728 / NCIMB 11950 / KT2440), this protein is Protease HtpX.